Here is a 623-residue protein sequence, read N- to C-terminus: Sodium-coupled monocarboxylate transporter 2 (623 aa).

At Met-1 to Gly-10 the chain is on the extracellular side. The chain crosses the membrane as a helical span at residues Asp-11–Ile-31. At Lys-32–Ser-50 the chain is on the cytoplasmic side. The helical transmembrane segment at Cys-51–Ala-71 threads the bilayer. The Extracellular portion of the chain corresponds to Pro-72–Val-83. The helical transmembrane segment at Ile-84 to Phe-104 threads the bilayer. The Cytoplasmic segment spans residues Tyr-105 to Thr-129. Residues Leu-130–Ala-150 traverse the membrane as a helical segment. Topologically, residues Leu-151–Asp-158 are extracellular. Residues Leu-159–Leu-179 form a helical membrane-spanning segment. Residues Lys-180–Ala-181 are Cytoplasmic-facing. A helical membrane pass occupies residues Val-182–Ile-202. Residues Gln-203–Arg-236 lie on the Extracellular side of the membrane. Residues His-237–Asn-257 form a helical membrane-spanning segment. Topologically, residues Gln-258–Ala-276 are cytoplasmic. A helical membrane pass occupies residues Leu-277–Ile-297. The Extracellular portion of the chain corresponds to Met-298–Tyr-322. The chain crosses the membrane as a helical span at residues Phe-323–Phe-343. The Cytoplasmic portion of the chain corresponds to Ser-344 to Cys-386. Residues Val-387–Val-407 form a helical membrane-spanning segment. Topologically, residues Gln-408 to Ser-412 are extracellular. Residues Ile-413–Phe-433 traverse the membrane as a helical segment. The Cytoplasmic portion of the chain corresponds to Thr-434–Gly-438. A helical transmembrane segment spans residues Ala-439–Ile-459. At Tyr-460–Tyr-510 the chain is on the extracellular side. 2 N-linked (GlcNAc...) asparagine glycosylation sites follow: Asn-465 and Asn-478. A helical transmembrane segment spans residues Leu-511–Leu-531. The Cytoplasmic segment spans residues Thr-532–Leu-623.

The protein belongs to the sodium:solute symporter (SSF) (TC 2.A.21) family.

It is found in the apical cell membrane. The catalysed reaction is (S)-lactate(out) + Na(+)(out) = (S)-lactate(in) + Na(+)(in). It carries out the reaction nicotinate(out) + Na(+)(out) = nicotinate(in) + Na(+)(in). It catalyses the reaction pyruvate(out) + Na(+)(out) = pyruvate(in) + Na(+)(in). The enzyme catalyses propanoate(out) + Na(+)(out) = propanoate(in) + Na(+)(in). The catalysed reaction is butanoate(out) + Na(+)(out) = butanoate(in) + Na(+)(in). It carries out the reaction acetoacetate(out) + Na(+)(out) = acetoacetate(in) + Na(+)(in). Its function is as follows. Acts as an electroneutral and low-affinity sodium (Na(+))-dependent sodium-coupled solute transporter. Catalyzes the transport across the plasma membrane of many monocarboxylates such as lactate, pyruvate, nicotinate, propionate, butyrate and beta-D-hydroxybutyrate. This chain is Sodium-coupled monocarboxylate transporter 2 (slc5a12), found in Danio rerio (Zebrafish).